The sequence spans 185 residues: Elongation factor P (185 aa).

Belongs to the elongation factor P family.

The protein resides in the cytoplasm. It participates in protein biosynthesis; polypeptide chain elongation. In terms of biological role, involved in peptide bond synthesis. Stimulates efficient translation and peptide-bond synthesis on native or reconstituted 70S ribosomes in vitro. Probably functions indirectly by altering the affinity of the ribosome for aminoacyl-tRNA, thus increasing their reactivity as acceptors for peptidyl transferase. In Bacillus velezensis (strain DSM 23117 / BGSC 10A6 / LMG 26770 / FZB42) (Bacillus amyloliquefaciens subsp. plantarum), this protein is Elongation factor P.